The chain runs to 526 residues: ATP synthase subunit alpha (526 aa).

171–178 (GDRQTGKT) contributes to the ATP binding site.

Belongs to the ATPase alpha/beta chains family. In terms of assembly, F-type ATPases have 2 components, CF(1) - the catalytic core - and CF(0) - the membrane proton channel. CF(1) has five subunits: alpha(3), beta(3), gamma(1), delta(1), epsilon(1). CF(0) has four main subunits: a(1), b(1), b'(1) and c(9-12).

Its subcellular location is the cell inner membrane. The enzyme catalyses ATP + H2O + 4 H(+)(in) = ADP + phosphate + 5 H(+)(out). Its function is as follows. Produces ATP from ADP in the presence of a proton gradient across the membrane. The alpha chain is a regulatory subunit. The polypeptide is ATP synthase subunit alpha (Chlorobium chlorochromatii (strain CaD3)).